We begin with the raw amino-acid sequence, 144 residues long: D-aminoacyl-tRNA deacylase (144 aa).

A Gly-cisPro motif, important for rejection of L-amino acids motif is present at residues 136–137; sequence GP.

It belongs to the DTD family. As to quaternary structure, homodimer.

The protein localises to the cytoplasm. It catalyses the reaction glycyl-tRNA(Ala) + H2O = tRNA(Ala) + glycine + H(+). The enzyme catalyses a D-aminoacyl-tRNA + H2O = a tRNA + a D-alpha-amino acid + H(+). Its function is as follows. An aminoacyl-tRNA editing enzyme that deacylates mischarged D-aminoacyl-tRNAs. Also deacylates mischarged glycyl-tRNA(Ala), protecting cells against glycine mischarging by AlaRS. Acts via tRNA-based rather than protein-based catalysis; rejects L-amino acids rather than detecting D-amino acids in the active site. By recycling D-aminoacyl-tRNA to D-amino acids and free tRNA molecules, this enzyme counteracts the toxicity associated with the formation of D-aminoacyl-tRNA entities in vivo and helps enforce protein L-homochirality. In Haemophilus ducreyi (strain 35000HP / ATCC 700724), this protein is D-aminoacyl-tRNA deacylase.